The following is a 369-amino-acid chain: Phosphoribosyl pyrophosphate synthase-associated protein 2 (369 aa).

Methionine 1 is subject to N-acetylmethionine. Threonine 5 carries the post-translational modification Phosphothreonine. A phosphoserine mark is found at serine 219, serine 227, and serine 233.

This sequence belongs to the ribose-phosphate pyrophosphokinase family. As to quaternary structure, binds to PRPS1 and PRPS2. Ubiquitous.

Its function is as follows. Seems to play a negative regulatory role in 5-phosphoribose 1-diphosphate synthesis. This Homo sapiens (Human) protein is Phosphoribosyl pyrophosphate synthase-associated protein 2 (PRPSAP2).